The chain runs to 1392 residues: Protein dispatched homolog 3 (1392 aa).

At 1 to 73 (MDTEDDPLLQ…LGWAFTNPCC (73 aa)) the chain is on the cytoplasmic side. The tract at residues 16-40 (EEQEEEEATGETFLGAQKPGPQPGA) is disordered. Residues 74–94 (AGLVLFLGCSIPMALSAFMFL) traverse the membrane as a helical segment. The Lumenal segment spans residues 95–462 (YYPPLDIDIS…YEVRRTFNND (368 aa)). Positions 162–248 (GNRSRQASRA…HAAVAANQSR (87 aa)) are disordered. N-linked (GlcNAc...) asparagine glycosylation is present at asparagine 163. Over residues 190-199 (SAAQKPTANR) the composition is skewed to polar residues. The SSD domain maps to 457–615 (RTFNNDMLLA…LVTMPAALGL (159 aa)). Residues 463–483 (MLLAFISSSCIAALVYILTSC) form a helical membrane-spanning segment. Residue serine 484 is a topological domain, cytoplasmic. Residues 485-505 (VFLSFFGIASIGLSCLVALFL) traverse the membrane as a helical segment. Residues 506-508 (YHV) lie on the Lumenal side of the membrane. A helical transmembrane segment spans residues 509–529 (VFGIQYLGILNGVAAFVIVGI). Residues 530 to 573 (GVDDVFVFINTYRQATHLEDPQLRMIHTVQTAGKATFFTSLTTA) are Cytoplasmic-facing. Residues 574-594 (AAYAANVFSQIPAVHDFGLFM) traverse the membrane as a helical segment. Position 595 (serine 595) is a topological domain, lumenal. The helical transmembrane segment at 596–616 (LIVSCCWLAVLVTMPAALGLW) threads the bilayer. Residues 617–729 (SLYLAPLESS…WVLWSAVKSR (113 aa)) are Cytoplasmic-facing. Residues 730–750 (WVIVGLFVSILILSLVFASRL) form a helical membrane-spanning segment. Over 751 to 1182 (RPASRAPLLF…IFMEIVGVQS (432 aa)) the chain is Lumenal. N-linked (GlcNAc...) asparagine glycosylation occurs at asparagine 1021. The helical transmembrane segment at 1183–1203 (ALCGLVLSLLICVAAVAVFTT) threads the bilayer. A topological domain (cytoplasmic) is located at residue histidine 1204. A helical transmembrane segment spans residues 1205 to 1225 (ILLLLPVLLSILGIVCLVVTI). Residues 1226–1291 (MYWSGWEMGA…TLEAVRHVGV (66 aa)) lie on the Lumenal side of the membrane. Residues 1292–1312 (AIVSSALTTVIATVPLFFCII) traverse the membrane as a helical segment. The Cytoplasmic segment spans residues 1313 to 1320 (APFAKFGK). A helical membrane pass occupies residues 1321–1341 (IVALNTGVSILYTLTVSTALL). Over 1342–1358 (GIMAPSSFTRTRTSFLK) the chain is Lumenal. A helical membrane pass occupies residues 1359-1379 (ALGAVLLAGALGLGACLVLLQ). Over 1380–1392 (SGYKIPLPAGASL) the chain is Cytoplasmic.

The protein belongs to the patched family. In terms of tissue distribution, expressed in brain and testis.

It is found in the endoplasmic reticulum membrane. Its subcellular location is the nucleus membrane. The protein localises to the cytoplasmic vesicle membrane. Plays a role in neuronal proliferation and differentiation. Plays a role in the accumulation of cellular cholesterol. Involved in intracellular lipid droplet formation. May contribute to cholesterol homeostasis in neuronal cells. In Homo sapiens (Human), this protein is Protein dispatched homolog 3.